The primary structure comprises 334 residues: Glycerol-1-phosphate dehydrogenase [NAD(P)+] (334 aa).

Residues G77–D81 and T99–S102 each bind NAD(+). D104 is a binding site for substrate. S108 provides a ligand contact to NAD(+). D147 provides a ligand contact to substrate. Zn(2+) is bound by residues D147 and H225. H229 is a substrate binding site. H246 contributes to the Zn(2+) binding site.

It belongs to the glycerol-1-phosphate dehydrogenase family. It depends on Zn(2+) as a cofactor.

The protein localises to the cytoplasm. The catalysed reaction is sn-glycerol 1-phosphate + NAD(+) = dihydroxyacetone phosphate + NADH + H(+). It carries out the reaction sn-glycerol 1-phosphate + NADP(+) = dihydroxyacetone phosphate + NADPH + H(+). The protein operates within membrane lipid metabolism; glycerophospholipid metabolism. Functionally, catalyzes the NAD(P)H-dependent reduction of dihydroxyacetonephosphate (DHAP or glycerone phosphate) to glycerol 1-phosphate (G1P). The G1P thus generated is used as the glycerophosphate backbone of phospholipids in the cellular membranes of Archaea. The protein is Glycerol-1-phosphate dehydrogenase [NAD(P)+] of Methanococcus maripaludis (strain DSM 14266 / JCM 13030 / NBRC 101832 / S2 / LL).